The sequence spans 185 residues: Probable DNA-directed RNA polymerase subunit delta (185 aa).

In terms of domain architecture, HTH HARE-type spans 14–81 (LSMIEVAHAI…GDNTWGLRAW (68 aa)). The disordered stretch occupies residues 90–185 (ATVGENEEDE…DEEDEDEDDE (96 aa)). Composition is skewed to acidic residues over residues 117–167 (DTDD…DDGI) and 175–185 (HDEEDEDEDDE).

Belongs to the RpoE family. RNAP is composed of a core of 2 alpha, a beta and a beta' subunits. The core is associated with a delta subunit and one of several sigma factors.

Participates in both the initiation and recycling phases of transcription. In the presence of the delta subunit, RNAP displays an increased specificity of transcription, a decreased affinity for nucleic acids, and an increased efficiency of RNA synthesis because of enhanced recycling. The chain is Probable DNA-directed RNA polymerase subunit delta from Limosilactobacillus reuteri (strain DSM 20016) (Lactobacillus reuteri).